The sequence spans 245 residues: tRNA1(Val) (adenine(37)-N6)-methyltransferase (245 aa).

The protein belongs to the methyltransferase superfamily. tRNA (adenine-N(6)-)-methyltransferase family.

The protein localises to the cytoplasm. It carries out the reaction adenosine(37) in tRNA1(Val) + S-adenosyl-L-methionine = N(6)-methyladenosine(37) in tRNA1(Val) + S-adenosyl-L-homocysteine + H(+). Functionally, specifically methylates the adenine in position 37 of tRNA(1)(Val) (anticodon cmo5UAC). The sequence is that of tRNA1(Val) (adenine(37)-N6)-methyltransferase from Shigella sonnei (strain Ss046).